The following is an 867-amino-acid chain: Mitochondrial escape protein 2 (867 aa).

2 disordered regions span residues methionine 1 to arginine 20 and arginine 44 to glycine 66. A mitochondrion-targeting transit peptide spans methionine 1–alanine 41. Over histidine 42–arginine 308 the chain is Mitochondrial matrix. Low complexity predominate over residues alanine 48–threonine 59. The region spanning serine 203 to arginine 293 is the RRM domain. A helical transmembrane segment spans residues isoleucine 309–isoleucine 329. Over arginine 330–glycine 867 the chain is Mitochondrial intermembrane. The segment covering phenylalanine 614–serine 639 has biased composition (basic and acidic residues). A disordered region spans residues phenylalanine 614–proline 647. Positions leucine 797–methionine 857 form a coiled coil.

Belongs to the YME2 family.

The protein localises to the mitochondrion inner membrane. Functionally, plays a role in maintaining the mitochondrial genome and in controlling the mtDNA escape. Involved in the regulation of mtDNA nucleotide structure and number. May have a dispensable role in early maturation of pre-rRNA. The protein is Mitochondrial escape protein 2 (msp-45) of Neurospora crassa (strain ATCC 24698 / 74-OR23-1A / CBS 708.71 / DSM 1257 / FGSC 987).